A 432-amino-acid chain; its full sequence is Glutamyl-tRNA reductase (432 aa).

Substrate contacts are provided by residues Thr49–Arg52, Ser101, Glu106–Gln108, and Gln112. The active-site Nucleophile is the Cys50. Gly181–Ile186 contributes to the NADP(+) binding site. A disordered region spans residues Lys410–Ser432.

Belongs to the glutamyl-tRNA reductase family. In terms of assembly, homodimer.

The catalysed reaction is (S)-4-amino-5-oxopentanoate + tRNA(Glu) + NADP(+) = L-glutamyl-tRNA(Glu) + NADPH + H(+). The protein operates within porphyrin-containing compound metabolism; protoporphyrin-IX biosynthesis; 5-aminolevulinate from L-glutamyl-tRNA(Glu): step 1/2. Its function is as follows. Catalyzes the NADPH-dependent reduction of glutamyl-tRNA(Glu) to glutamate 1-semialdehyde (GSA). This Xylella fastidiosa (strain M23) protein is Glutamyl-tRNA reductase.